Reading from the N-terminus, the 331-residue chain is Vitamin B12 import system permease protein BtuC (331 aa).

Transmembrane regions (helical) follow at residues 18–38 (WLFG…CAGE), 64–84 (LAVL…QALF), 91–111 (PGLL…VLLG), 114–134 (VLPG…ITFI), 149–169 (LLAG…AVYF), 194–214 (LWLM…SQPL), 243–263 (GWMV…GLVI), 277–297 (VLLP…DIIA), and 305–325 (ELPI…WLLL).

It belongs to the binding-protein-dependent transport system permease family. FecCD subfamily. In terms of assembly, the complex is composed of two ATP-binding proteins (BtuD), two transmembrane proteins (BtuC) and a solute-binding protein (BtuF).

The protein localises to the cell inner membrane. Part of the ABC transporter complex BtuCDF involved in vitamin B12 import. Involved in the translocation of the substrate across the membrane. The protein is Vitamin B12 import system permease protein BtuC of Klebsiella pneumoniae subsp. pneumoniae (strain ATCC 700721 / MGH 78578).